Reading from the N-terminus, the 328-residue chain is Beta-ketoacyl-[acyl-carrier-protein] synthase III (328 aa).

Catalysis depends on residues Cys-113 and His-253. The ACP-binding stretch occupies residues 254–258 (QANLR). The active site involves Asn-283.

The protein belongs to the thiolase-like superfamily. FabH family. In terms of assembly, homodimer.

The protein resides in the cytoplasm. It carries out the reaction malonyl-[ACP] + acetyl-CoA + H(+) = 3-oxobutanoyl-[ACP] + CO2 + CoA. It functions in the pathway lipid metabolism; fatty acid biosynthesis. Its function is as follows. Catalyzes the condensation reaction of fatty acid synthesis by the addition to an acyl acceptor of two carbons from malonyl-ACP. Catalyzes the first condensation reaction which initiates fatty acid synthesis and may therefore play a role in governing the total rate of fatty acid production. Possesses both acetoacetyl-ACP synthase and acetyl transacylase activities. Its substrate specificity determines the biosynthesis of branched-chain and/or straight-chain of fatty acids. The sequence is that of Beta-ketoacyl-[acyl-carrier-protein] synthase III from Fusobacterium nucleatum subsp. nucleatum (strain ATCC 25586 / DSM 15643 / BCRC 10681 / CIP 101130 / JCM 8532 / KCTC 2640 / LMG 13131 / VPI 4355).